A 187-amino-acid chain; its full sequence is UPF0301 protein VP2612 (187 aa).

This sequence belongs to the UPF0301 (AlgH) family.

This chain is UPF0301 protein VP2612, found in Vibrio parahaemolyticus serotype O3:K6 (strain RIMD 2210633).